The chain runs to 400 residues: Methylthioribose kinase (400 aa).

ATP contacts are provided by residues Asn-40, Lys-57, and 111 to 113 (EDL). Residue Asp-229 coordinates substrate. 246 to 248 (DAE) serves as a coordination point for ATP. Arg-344 provides a ligand contact to substrate.

Belongs to the methylthioribose kinase family. In terms of assembly, homodimer.

The catalysed reaction is 5-(methylsulfanyl)-D-ribose + ATP = 5-(methylsulfanyl)-alpha-D-ribose 1-phosphate + ADP + H(+). The protein operates within amino-acid biosynthesis; L-methionine biosynthesis via salvage pathway; S-methyl-5-thio-alpha-D-ribose 1-phosphate from S-methyl-5'-thioadenosine (hydrolase route): step 2/2. Functionally, catalyzes the phosphorylation of methylthioribose into methylthioribose-1-phosphate. In Pectobacterium atrosepticum (strain SCRI 1043 / ATCC BAA-672) (Erwinia carotovora subsp. atroseptica), this protein is Methylthioribose kinase.